Reading from the N-terminus, the 189-residue chain is Interferon alpha-1 (189 aa).

Residues 1-23 (MAPTSAFLTALVLLSCNAICSLG) form the signal peptide. 2 disulfide bridges follow: C24–C122 and C52–C162.

It belongs to the alpha/beta interferon family. In terms of assembly, interacts with CR2.

The protein resides in the secreted. Its function is as follows. Produced by macrophages, IFN-alpha have antiviral activities. Interferon stimulates the production of two enzymes: a protein kinase and an oligoadenylate synthetase. The chain is Interferon alpha-1 from Sus scrofa (Pig).